The following is a 156-amino-acid chain: Small ribosomal subunit protein uS7 (156 aa).

This sequence belongs to the universal ribosomal protein uS7 family. In terms of assembly, part of the 30S ribosomal subunit. Contacts proteins S9 and S11.

Functionally, one of the primary rRNA binding proteins, it binds directly to 16S rRNA where it nucleates assembly of the head domain of the 30S subunit. Is located at the subunit interface close to the decoding center, probably blocks exit of the E-site tRNA. This is Small ribosomal subunit protein uS7 from Photobacterium profundum (strain SS9).